Consider the following 132-residue polypeptide: Gamma-crystallin-5 (132 aa).

The Beta/gamma crystallin 'Greek key' 2 domain maps to 1 to 40 (ILYEQPSYRGHQYYLWKGEYPDFQRWMGFNDSIRSCRMSP). The tract at residues 41–45 (YHQGQ) is connecting peptide. Beta/gamma crystallin 'Greek key' domains lie at 46–86 (YKMR…NVFD) and 87–129 (GNWM…RRVH).

It belongs to the beta/gamma-crystallin family. In terms of assembly, monomer.

Crystallins are the dominant structural components of the vertebrate eye lens. The chain is Gamma-crystallin-5 (cryg5) from Xenopus laevis (African clawed frog).